Consider the following 355-residue polypeptide: 3-dehydroquinate synthase (355 aa).

NAD(+) is bound by residues E71–K76, G105–D109, T129–S130, K142, and K151. 3 residues coordinate Zn(2+): E184, H246, and H263.

This sequence belongs to the sugar phosphate cyclases superfamily. Dehydroquinate synthase family. The cofactor is Co(2+). Requires Zn(2+) as cofactor. NAD(+) is required as a cofactor.

The protein resides in the cytoplasm. The enzyme catalyses 7-phospho-2-dehydro-3-deoxy-D-arabino-heptonate = 3-dehydroquinate + phosphate. It participates in metabolic intermediate biosynthesis; chorismate biosynthesis; chorismate from D-erythrose 4-phosphate and phosphoenolpyruvate: step 2/7. Its function is as follows. Catalyzes the conversion of 3-deoxy-D-arabino-heptulosonate 7-phosphate (DAHP) to dehydroquinate (DHQ). The polypeptide is 3-dehydroquinate synthase (Streptococcus sanguinis (strain SK36)).